A 1034-amino-acid polypeptide reads, in one-letter code: N-acetyl-beta-glucosaminyl-glycoprotein 4-beta-N-acetylgalactosaminyltransferase 1 (1034 aa).

Residues 1 to 12 lie on the Cytoplasmic side of the membrane; sequence MPWFPVKKVRKQ. A helical; Signal-anchor for type II membrane protein transmembrane segment spans residues 13–31; that stretch reads MKLLLLLLLLTCAAWLTYV. Residues 32-1034 lie on the Lumenal side of the membrane; that stretch reads HRSLVRPGRA…SRKGARAQRS (1003 aa). Positions 51–104 are disordered; it reads DGEKLTGVTDSRGVRVPSSTQRSEDSSESHEEEQAPEGRGPNMLFPGGPRKPPP. The span at 72–83 shows a compositional bias: basic and acidic residues; the sequence is RSEDSSESHEEE. N106 carries N-linked (GlcNAc...) asparagine glycosylation. A PA14 domain is found at 109 to 279; the sequence is HQTPPWREEF…LKFEIIDSAH (171 aa). 2 disordered regions span residues 450–486 and 556–600; these read PTDA…DEQT and RVQL…QLHG. The segment covering 461 to 473 has biased composition (low complexity); that stretch reads TPTPAASTGTTAS. N611 carries an N-linked (GlcNAc...) asparagine glycan. Disordered regions lie at residues 626–669 and 782–801; these read SQVS…PLGR and GDED…HPDS. A compositionally biased stretch (acidic residues) spans 636–661; sequence EGEEGEEDGAPGDEATSEDSEEEEEP.

The protein belongs to the chondroitin N-acetylgalactosaminyltransferase family.

It localises to the golgi apparatus. Its subcellular location is the golgi stack membrane. It catalyses the reaction an N-acetyl-beta-D-glucosaminyl derivative + UDP-N-acetyl-alpha-D-galactosamine = an N-acetyl-beta-D-galactosaminyl-(1-&gt;4)-N-acetyl-beta-D-glucosaminyl derivative + UDP + H(+). Its function is as follows. Transfers N-acetylgalactosamine (GalNAc) from UDP-GalNAc to N-acetylglucosamine-beta-benzyl with a beta-1,4-linkage to form N,N'-diacetyllactosediamine, GalNAc-beta-1,4-GlcNAc structures in N-linked glycans and probably O-linked glycans. The polypeptide is N-acetyl-beta-glucosaminyl-glycoprotein 4-beta-N-acetylgalactosaminyltransferase 1 (B4galnt4) (Mus musculus (Mouse)).